Consider the following 149-residue polypeptide: Protein AIM7 (149 aa).

Position 2 is an N-acetylserine (Ser2). Residues 3–147 form the ADF-H domain; the sequence is NLYKIGTETR…DVEELREQLE (145 aa). Ser137 is subject to Phosphoserine.

It belongs to the actin-binding proteins ADF family. GMF subfamily.

It localises to the cytoplasm. Its subcellular location is the nucleus. May be involved in mitochondrial organization and biogenesis. The protein is Protein AIM7 (AIM7) of Saccharomyces cerevisiae (strain ATCC 204508 / S288c) (Baker's yeast).